Here is a 325-residue protein sequence, read N- to C-terminus: Melanocortin receptor 5 (325 aa).

Residues 1-37 (MNSSFHLHFLDLGLNATEGNLSGLSVRNASSPCEDMG) are Extracellular-facing. 4 N-linked (GlcNAc...) asparagine glycosylation sites follow: Asn-2, Asn-15, Asn-20, and Asn-28. A helical transmembrane segment spans residues 38-61 (IAVEVFLALGLISLLENILVIGAI). Residues 62–73 (VRNRNLHIPMYF) lie on the Cytoplasmic side of the membrane. A helical membrane pass occupies residues 74 to 97 (FVGSLAVADMLVSLSNFWETITIY). Over 98 to 114 (LLTNKHLVMADASVRHL) the chain is Extracellular. The chain crosses the membrane as a helical span at residues 115-138 (DNVFDSMICISVVASMCSLLAIAV). Topologically, residues 139–155 (DRYVTIFCRLRYQRIMT) are cytoplasmic. A helical transmembrane segment spans residues 156–179 (GRRSGAIIAGIWAFCTSCGTVFIV). Residues 180–186 (YYESTYV) lie on the Extracellular side of the membrane. The helical transmembrane segment at 187–211 (VVCLIAMFLTMLLLMASLYTHMFLL) threads the bilayer. Over 212–239 (ARTHVRRIAALPGHSSVRQRTGVKGAIT) the chain is Cytoplasmic. A helical transmembrane segment spans residues 240-265 (LAMLLGVFIICWAPFFLHLILMISCP). Residues 266 to 273 (QNLYCSCF) are Extracellular-facing. Residues 274 to 297 (MSHFNMYLILIMCNSVIDPLIYAF) traverse the membrane as a helical segment. Residues 298–325 (RSQEMRKTFKEIVCFQGFRTPCRFPSTY) are Cytoplasmic-facing. Cys-311 carries S-palmitoyl cysteine lipidation.

The protein belongs to the G-protein coupled receptor 1 family.

It localises to the cell membrane. Its function is as follows. Receptor for MSH (alpha, beta and gamma) and ACTH. The activity of this receptor is mediated by G proteins which activate adenylate cyclase. This receptor is a possible mediator of the immunomodulation properties of melanocortins. The polypeptide is Melanocortin receptor 5 (MC5R) (Ovis aries (Sheep)).